A 329-amino-acid chain; its full sequence is Quinone oxidoreductase (329 aa).

At Ala-2 the chain carries N-acetylalanine. Lys-23 carries the post-translational modification N6-acetyllysine. Residues Tyr-53, 158–161 (SGGV), Gly-181, His-200, Asn-229, 246–249 (VGSR), and 269–271 (VAL) each bind NADP(+). Ser-248 is subject to Phosphoserine.

It belongs to the zinc-containing alcohol dehydrogenase family. Quinone oxidoreductase subfamily. Homotetramer.

Its subcellular location is the cytoplasm. It catalyses the reaction 2 a quinone + NADPH + H(+) = 2 a 1,4-benzosemiquinone + NADP(+). Functionally, does not have alcohol dehydrogenase activity. Binds NADP and acts through a one-electron transfer process. Orthoquinones, such as 1,2-naphthoquinone or 9,10-phenanthrenequinone, are the best substrates (in vitro). May act in the detoxification of xenobiotics. Interacts with (AU)-rich elements (ARE) in the 3'-UTR of target mRNA species and enhances their stability. NADPH binding interferes with mRNA binding. The protein is Quinone oxidoreductase (CRYZ) of Sus scrofa (Pig).